Consider the following 309-residue polypeptide: MTSSSTPRHRGIFPVVPTTFADTGELDLASQKRAVDFMIDAGSDGLCILANFSEQFAITDDERDVLTRTILEHVAGRVPVIVTTSHYSTQVCAARSLRAQQLGAAMVMAMPPYHGATFRVPEAQIFEFYARVSDAIAIPIMVQDAPASGTALSAPFLARMAREIEQVAYFKIETPGAANKLRELIRLGGDAIEGPWDGEEAITLLADLHAGATGAMTGGGFPDGIRPILEAWREGRHDDAYARYQAWLPLINHENRQSGILTAKALMREGGVIASERPRHPMPELHPDTRAELLAIARRLDPLVLRWAH.

Lys-171 (schiff-base intermediate with substrate) is an active-site residue.

This sequence belongs to the DapA family. In terms of assembly, homodimer.

The enzyme catalyses 2-dehydro-3-deoxy-L-arabinonate = 2,5-dioxopentanoate + H2O. Catalyzes the dehydration of L-2-keto-3-deoxyarabonate (L-KDA) to alpha-ketoglutaric semialdehyde (alphaKGSA). Is involved in a degradation pathway of L-arabinose that allows A.brasilense to grow on L-arabinose as a sole carbon source. The polypeptide is L-2-keto-3-deoxyarabonate dehydratase (araD) (Azospirillum brasilense).